Reading from the N-terminus, the 640-residue chain is UvrABC system protein C (640 aa).

One can recognise a GIY-YIG domain in the interval 22–101 (NDPGCYLMKD…IKSHQPYFNV (80 aa)). The UVR domain maps to 211 to 246 (DELRILLEKQMISFSESLKFEEAGSVRDQLKGIDRL).

Belongs to the UvrC family. In terms of assembly, interacts with UvrB in an incision complex.

The protein resides in the cytoplasm. Its function is as follows. The UvrABC repair system catalyzes the recognition and processing of DNA lesions. UvrC both incises the 5' and 3' sides of the lesion. The N-terminal half is responsible for the 3' incision and the C-terminal half is responsible for the 5' incision. The chain is UvrABC system protein C from Prochlorococcus marinus (strain NATL1A).